We begin with the raw amino-acid sequence, 163 residues long: C-type lectin lectoxin-Lio2 (163 aa).

The N-terminal stretch at 1-21 is a signal peptide; that stretch reads MERFIFAALLVVALSLSGTGA. Intrachain disulfides connect cysteine 25–cysteine 36, cysteine 53–cysteine 152, and cysteine 127–cysteine 144. Residues 32–153 enclose the C-type lectin domain; that stretch reads SDGYCYKVFK…CRSKRYFICK (122 aa). Positions 117 to 119 match the Mannose-binding motif; that stretch reads EPN. Ca(2+) contacts are provided by glutamate 125 and aspartate 141.

This sequence belongs to the true venom lectin family. In terms of tissue distribution, expressed by the venom gland.

Its subcellular location is the secreted. Functionally, mannose-binding lectin which recognizes specific carbohydrate structures and agglutinates a variety of animal cells by binding to cell-surface glycoproteins and glycolipids. May be a calcium-dependent lectin. In Erythrolamprus poecilogyrus (Water snake), this protein is C-type lectin lectoxin-Lio2.